A 97-amino-acid chain; its full sequence is YcgL domain-containing protein Pfl01_1389 (97 aa).

The YcgL domain maps to 3–87; the sequence is RICSIYQSSK…AEEEYIEHLP (85 aa).

The sequence is that of YcgL domain-containing protein Pfl01_1389 from Pseudomonas fluorescens (strain Pf0-1).